A 632-amino-acid chain; its full sequence is Threonine--tRNA ligase (632 aa).

A TGS domain is found at Met-1 to Thr-61. The interval Asp-242–Pro-533 is catalytic. Cys-333, His-384, and His-510 together coordinate Zn(2+).

Belongs to the class-II aminoacyl-tRNA synthetase family. As to quaternary structure, homodimer. Requires Zn(2+) as cofactor.

It is found in the cytoplasm. It carries out the reaction tRNA(Thr) + L-threonine + ATP = L-threonyl-tRNA(Thr) + AMP + diphosphate + H(+). Functionally, catalyzes the attachment of threonine to tRNA(Thr) in a two-step reaction: L-threonine is first activated by ATP to form Thr-AMP and then transferred to the acceptor end of tRNA(Thr). Also edits incorrectly charged L-seryl-tRNA(Thr). This Ruthia magnifica subsp. Calyptogena magnifica protein is Threonine--tRNA ligase.